The following is a 146-amino-acid chain: D-aminoacyl-tRNA deacylase (146 aa).

Residues 137-138 carry the Gly-cisPro motif, important for rejection of L-amino acids motif; sequence GP.

It belongs to the DTD family. As to quaternary structure, homodimer.

Its subcellular location is the cytoplasm. The enzyme catalyses glycyl-tRNA(Ala) + H2O = tRNA(Ala) + glycine + H(+). It catalyses the reaction a D-aminoacyl-tRNA + H2O = a tRNA + a D-alpha-amino acid + H(+). Functionally, an aminoacyl-tRNA editing enzyme that deacylates mischarged D-aminoacyl-tRNAs. Also deacylates mischarged glycyl-tRNA(Ala), protecting cells against glycine mischarging by AlaRS. Acts via tRNA-based rather than protein-based catalysis; rejects L-amino acids rather than detecting D-amino acids in the active site. By recycling D-aminoacyl-tRNA to D-amino acids and free tRNA molecules, this enzyme counteracts the toxicity associated with the formation of D-aminoacyl-tRNA entities in vivo and helps enforce protein L-homochirality. This is D-aminoacyl-tRNA deacylase from Bacillus cereus (strain Q1).